Here is a 968-residue protein sequence, read N- to C-terminus: Bifunctional glyoxylate cycle protein (968 aa).

Residues 1–443 (MSSAAKNFYQ…AVASQDEEIL (443 aa)) form an isocitrate lyase region. The interval 444–968 (SLTAQNVAGD…AYDRLVSEGY (525 aa)) is malate synthase. R601 acts as the Proton acceptor in catalysis. D881 acts as the Proton donor in catalysis.

This sequence in the N-terminal section; belongs to the isocitrate lyase/PEP mutase superfamily. Isocitrate lyase family. It in the C-terminal section; belongs to the malate synthase family. Intestinal and body wall muscle cells.

It catalyses the reaction D-threo-isocitrate = glyoxylate + succinate. The catalysed reaction is glyoxylate + acetyl-CoA + H2O = (S)-malate + CoA + H(+). Its pathway is carbohydrate metabolism; glyoxylate cycle; (S)-malate from isocitrate: step 1/2. It functions in the pathway carbohydrate metabolism; glyoxylate cycle; (S)-malate from isocitrate: step 2/2. This Caenorhabditis elegans protein is Bifunctional glyoxylate cycle protein (icl-1).